We begin with the raw amino-acid sequence, 520 residues long: Cytosol aminopeptidase (520 aa).

Zn(2+) contacts are provided by L200, M201, K280, and D285. Residues K280, D285, S290, and K292 each contribute to the substrate site. Residue D285 participates in Mg(2+) binding. Residue K292 is part of the active site. Residues R301, D303, D362, and E364 each contribute to the Zn(2+) site. The substrate site is built by D303 and D362. Positions 362 and 364 each coordinate Mg(2+). R366 is a catalytic residue.

It belongs to the peptidase M17 family. In terms of assembly, homohexamer. Requires Zn(2+) as cofactor. Mn(2+) serves as cofactor.

It localises to the cytoplasm. The catalysed reaction is Release of an N-terminal amino acid, Xaa-|-Yaa-, in which Xaa is preferably Leu, but may be other amino acids including Pro although not Arg or Lys, and Yaa may be Pro. Amino acid amides and methyl esters are also readily hydrolyzed, but rates on arylamides are exceedingly low.. It carries out the reaction an S-substituted L-cysteinylglycine + H2O = an S-substituted L-cysteine + glycine. The enzyme catalyses L-cysteinylglycine + H2O = L-cysteine + glycine. It catalyses the reaction S-benzyl-L-cysteinylglycine + H2O = S-benzyl-L-cysteine + glycine. The catalysed reaction is Release of N-terminal proline from a peptide.. In terms of biological role, cytosolic metallopeptidase that catalyzes the removal of unsubstituted N-terminal hydrophobic amino acids from various peptides. The presence of Zn(2+) ions is essential for the peptidase activity, and the association with other cofactors can modulate the substrate spectificity of the enzyme. For instance, in the presence of Mn(2+), it displays a specific Cys-Gly hydrolyzing activity of Cys-Gly-S-conjugates. Involved in the metabolism of glutathione and in the degradation of glutathione S-conjugates, which may play a role in the control of the cell redox status. This is Cytosol aminopeptidase (lap3) from Xenopus tropicalis (Western clawed frog).